The primary structure comprises 497 residues: CRISPR-associated endodeoxyribonuclease Cas12f1 (497 aa).

Residues 29–122 (RKDLSTMSRF…PTYKITTAPI (94 aa)) are recognition domain (REC). The segment at 123–214 (RLQNNIYKLI…YCIIPYTFPT (92 aa)) is wedge domain (WED). A linker region spans residues 215 to 223 (HETVLDPDK). The ruvC-I stretch occupies residues 224 to 374 (VMGVDLGVAK…VAINPQYTSQ (151 aa)). Active-site residues include Asp228 and Glu327. Positions 375 to 432 (RCSMCGYIEKTNRSSQAVFECKQCGYGSRTICINCRHVQVSGDVCEECGGIVKKENVN) are target nucleic acid-binding (TNB). 4 residues coordinate Zn(2+): Cys376, Cys379, Cys395, and Cys398. A ruvC-II region spans residues 433–453 (ADYNAAKNISTPYIDQIIMEK). Residue Asp434 is part of the active site.

Belongs to the CRISPR-associated endonuclease Cas12f family. In terms of assembly, an asymmetric homodimer. Guide RNA is probably required for dimerization. Mg(2+) is required as a cofactor. It depends on Zn(2+) as a cofactor.

Functionally, CRISPR (clustered regularly interspaced short palindromic repeat), is an adaptive immune system that provides protection against mobile genetic elements (viruses, transposable elements and conjugative plasmids). CRISPR clusters contain sequences complementary to antecedent mobile elements and target invading nucleic acids. CRISPR clusters are transcribed and processed into CRISPR RNA (crRNA), which requires a trans-encoded small RNA (tracrRNA), but not this protein. Recognizes a short motif in the CRISPR repeat sequences (the 5' PAM or protospacer adjacent motif, TTC in this organism) to help distinguish self versus nonself, as targets within the CRISPR locus do not have PAMs. Has dsDNA endonuclease activity upon expression in E.coli of this protein, a mini CRISPR array and the probable tracrRNA. Plasmid cleavage is centered around positions 24 base pairs 3' of PAM. The mini system protects E.coli against transformation by foreign plasmids. In Syntrophomonas palmitatica (strain DSM 18709 / JCM 14374 / NBRC 102128 / MPA), this protein is CRISPR-associated endodeoxyribonuclease Cas12f1.